Reading from the N-terminus, the 82-residue chain is Endocuticle structural glycoprotein ABD-5 (82 aa).

Q1 carries the post-translational modification Pyrrolidone carboxylic acid. The 65-residue stretch at 18-82 (LGQYNFAYRT…ENGYQPRVQS (65 aa)) folds into the Chitin-binding type R&amp;R domain.

Functionally, component of the soft endocuticle of migratory locust. The chain is Endocuticle structural glycoprotein ABD-5 from Locusta migratoria (Migratory locust).